Here is a 94-residue protein sequence, read N- to C-terminus: Co-chaperonin GroES (94 aa).

It belongs to the GroES chaperonin family. As to quaternary structure, heptamer of 7 subunits arranged in a ring. Interacts with the chaperonin GroEL.

It localises to the cytoplasm. Together with the chaperonin GroEL, plays an essential role in assisting protein folding. The GroEL-GroES system forms a nano-cage that allows encapsulation of the non-native substrate proteins and provides a physical environment optimized to promote and accelerate protein folding. GroES binds to the apical surface of the GroEL ring, thereby capping the opening of the GroEL channel. The sequence is that of Co-chaperonin GroES from Streptococcus agalactiae.